Here is a 360-residue protein sequence, read N- to C-terminus: Probable dual-specificity RNA methyltransferase RlmN (360 aa).

E91 serves as the catalytic Proton acceptor. Residues 97–335 (QHYGQSVCVT…CVVRQEHGTD (239 aa)) enclose the Radical SAM core domain. C104 and C340 are joined by a disulfide. Residues C111, C115, and C118 each contribute to the [4Fe-4S] cluster site. Residues 163–164 (GE), S195, 218–220 (SLH), and N296 contribute to the S-adenosyl-L-methionine site. The S-methylcysteine intermediate role is filled by C340.

The protein belongs to the radical SAM superfamily. RlmN family. The cofactor is [4Fe-4S] cluster.

Its subcellular location is the cytoplasm. The enzyme catalyses adenosine(2503) in 23S rRNA + 2 reduced [2Fe-2S]-[ferredoxin] + 2 S-adenosyl-L-methionine = 2-methyladenosine(2503) in 23S rRNA + 5'-deoxyadenosine + L-methionine + 2 oxidized [2Fe-2S]-[ferredoxin] + S-adenosyl-L-homocysteine. The catalysed reaction is adenosine(37) in tRNA + 2 reduced [2Fe-2S]-[ferredoxin] + 2 S-adenosyl-L-methionine = 2-methyladenosine(37) in tRNA + 5'-deoxyadenosine + L-methionine + 2 oxidized [2Fe-2S]-[ferredoxin] + S-adenosyl-L-homocysteine. Its function is as follows. Specifically methylates position 2 of adenine 2503 in 23S rRNA and position 2 of adenine 37 in tRNAs. This is Probable dual-specificity RNA methyltransferase RlmN from Streptococcus equi subsp. zooepidemicus (strain MGCS10565).